The following is a 956-amino-acid chain: Chromatin assembly factor 1 subunit A (956 aa).

A binds to PCNA region spans residues 1-49 (MLEELECGAPGARGAATAMDCKDRPAFPVKKLIQARLPFKRLNLVPKGK). The segment at 1-314 (MLEELECGAP…QHSSTSPFPT (314 aa)) is binds to CBX1 chromo shadow domain. Disordered regions lie at residues 45 to 65 (VPKGKADDMSDDQGTSVQSKS) and 122 to 155 (DSNEQPDSLVDHNKLNSEASPSREAINGQREDTG). The segment covering 56–65 (DQGTSVQSKS) has biased composition (polar residues). Serine 65, serine 123, serine 138, serine 141, and serine 143 each carry phosphoserine. Lysine 182 participates in a covalent cross-link: Glycyl lysine isopeptide (Lys-Gly) (interchain with G-Cter in SUMO1); alternate. A Glycyl lysine isopeptide (Lys-Gly) (interchain with G-Cter in SUMO2); alternate cross-link involves residue lysine 182. Positions 188–222 (VGCGGAGRRGDSQECSPRSCPELTSGPRMCPRKEQ) are disordered. 2 positions are modified to phosphoserine: serine 206 and serine 224. Residues 233–246 (FKGKVPMVVLQDIL) carry the PxVxL motif motif. Disordered stretches follow at residues 250–432 (PPQI…KRLR) and 599–639 (DSDE…VPHG). Composition is skewed to low complexity over residues 282 to 296 (LSHSSLSSPSSTSSP) and 307 to 317 (SSTSPFPTSTP). Residue serine 310 is modified to Phosphoserine. The span at 329–432 (STEKNKLRLQ…RKKEEEKRLR (104 aa)) shows a compositional bias: basic and acidic residues. 2 stretches are compositionally biased toward acidic residues: residues 599–610 (DSDEEWEEEEPG) and 618–633 (GDDDDDMGEDEDEDDG). Positions 642–678 (SEDEGVTEECADPENHKVRQKLKAKEWDEFLAKGKRF) are necessary for homodimerization and competence for chromatin assembly. Residues 660-956 (RQKLKAKEWD…TLTASPLGAS (297 aa)) form a binds to p60 region. Threonine 722 is modified (phosphothreonine). The segment at 765–790 (LLSNHTGSPRSPSTTYLHTPTPSEDA) is disordered. Polar residues predominate over residues 767–786 (SNHTGSPRSPSTTYLHTPTP). A phosphoserine mark is found at serine 772, serine 775, and serine 803. Disordered stretches follow at residues 844–873 (SVPSAPKEDSGSVPSTGPSQGTPISLKRKS) and 933–956 (SGAGGGVGVDTGKATLTASPLGAS). The span at 855–866 (SVPSTGPSQGTP) shows a compositional bias: polar residues. Threonine 865 carries the phosphothreonine modification. Phosphoserine is present on residues serine 868, serine 873, and serine 951.

This sequence belongs to the CHAF1A family. In terms of assembly, homodimer. Part of the CAF-1 complex that contains RBBP4, CHAF1B and CHAF1A. CHAF1A binds directly to CHAF1B. Only minor amounts of RBBP4 are complexed with CHAF1A and CHAF1B in G1 phase. Interacts with PCNA; the interaction is direct. Interacts (via the PxVxL motif) with CBX5; the interaction is direct. Interacts with MBD1. Interacts with histones H3.1, H3.2 and H3.1t.

The protein localises to the nucleus. Its function is as follows. Acts as a component of the histone chaperone complex chromatin assembly factor 1 (CAF-1), which assembles histone octamers onto DNA during replication and repair. CAF-1 performs the first step of the nucleosome assembly process, bringing newly synthesized histones H3 and H4 to replicating DNA; histones H2A/H2B can bind to this chromatin precursor subsequent to DNA replication to complete the histone octamer. It may play a role in heterochromatin maintenance in proliferating cells by bringing newly synthesized cbx proteins to heterochromatic DNA replication foci. The chain is Chromatin assembly factor 1 subunit A from Homo sapiens (Human).